The primary structure comprises 526 residues: Tyrosine-protein kinase transforming protein Src (526 aa).

The interval 1–57 is disordered; the sequence is MGSSKSKPKDPSQRRRSLEPPDSTHHGGFPASQTPNKTAAPDTHRTPSRSFGTVATE. G2 is lipidated: N-myristoyl glycine; by host. The segment covering 7–25 has biased composition (basic and acidic residues); the sequence is KPKDPSQRRRSLEPPDSTH. The 62-residue stretch at 81–142 folds into the SH3 domain; it reads GGVTTFVALY…PSNYVAPSDS (62 aa). The 98-residue stretch at 148-245 folds into the SH2 domain; sequence WYFGKITRRE…GLCHRLTNVC (98 aa). Residues 267 to 517 form the Protein kinase domain; the sequence is LRLEVKLGQG…TFEYLQAQLL (251 aa). ATP contacts are provided by residues 273–281 and K295; that span reads LGQGCFGEV. D386 acts as the Proton acceptor in catalysis. Residue Y416 is modified to Phosphotyrosine; by autocatalysis.

This sequence belongs to the protein kinase superfamily. Tyr protein kinase family. SRC subfamily. As to quaternary structure, homodimer. The phosphorylated form is termed pp60v-src.

It carries out the reaction L-tyrosyl-[protein] + ATP = O-phospho-L-tyrosyl-[protein] + ADP + H(+). Functionally, this phosphoprotein, required for both the initiation and the maintenance of neoplastic transformation, is a protein kinase that catalyzes the phosphorylation of tyrosine residues in vitro. Causes mitotic slippage in addition to cytokinesis failure in the host cell. Phosphorylates and attenuates the activity of host CDK1, possibly causing the mitotic slippage. In Rous sarcoma virus subgroup A (strain Schmidt-Ruppin) (RSV-SR-A), this protein is Tyrosine-protein kinase transforming protein Src (V-SRC).